The following is a 147-amino-acid chain: Hemoglobin subunit beta (147 aa).

The 145-residue stretch at 3–147 (HWTAEEKQLI…VAHALARKYH (145 aa)) folds into the Globin domain. Heme b contacts are provided by His64 and His93.

This sequence belongs to the globin family. Heterotetramer of two alpha chains and two beta chains. Red blood cells.

In terms of biological role, involved in oxygen transport from the lung to the various peripheral tissues. This is Hemoglobin subunit beta (HBB) from Anas platyrhynchos (Mallard).